A 299-amino-acid polypeptide reads, in one-letter code: Hydrogenase maturation factor HypB (299 aa).

Ni(2+) contacts are provided by Cys2, Cys5, and Cys7. Residues 18 to 57 (EVGDDGHGHHHHDGHHDHDHDHDHHRGDHEHDDHHHAEDG) form a disordered region. The segment covering 31–57 (GHHDHDHDHDHHRGDHEHDDHHHAEDG) has biased composition (basic and acidic residues). The interval 107 to 268 (ALNFVSSPGS…LRVNPRLQTL (162 aa)) is G-domain. Cys167, His168, and Cys199 together coordinate Ni(2+). Residues Cys167, His168, and Cys199 each contribute to the Zn(2+) site.

This sequence belongs to the SIMIBI class G3E GTPase family. HypB/HupM subfamily.

Its function is as follows. Involved in the maturation of [NiFe] hydrogenases. Required for nickel insertion into the metal center of the hydrogenase. Exhibits a low intrinsic GTPase activity, which is essential for nickel insertion. Is able to bind 4 nickel ions per subunit. Can also bind zinc. The chain is Hydrogenase maturation factor HypB from Rhizobium leguminosarum bv. viciae.